The sequence spans 481 residues: Drebrin-like protein (481 aa).

The ADF-H domain maps to 3 to 131; the sequence is SLDISDPDIT…DEKAITAALN (129 aa). Positions 217 to 227 are enriched in basic and acidic residues; that stretch reads YWKQQQAEKQK. The tract at residues 217-423 is disordered; the sequence is YWKQQQAEKQ…PAEEQYDQSG (207 aa). Low complexity predominate over residues 228-237; it reads QQQQQQQQQA. Residues 248–261 show a composition bias toward polar residues; that stretch reads TVGNKFQEQVSKPT. A compositionally biased stretch (pro residues) spans 291 to 300; that stretch reads PPAPSRPAAP. Acidic residues predominate over residues 325–335; it reads QYEEPQYEEEQ. The span at 336–413 shows a compositional bias: low complexity; it reads QQQYEEQPTE…YQEEQQQYEQ (78 aa). Residues 422 to 481 enclose the SH3 domain; sequence SGYLQAKALYDYNGENDGDLSFREGDIITILDQSDPDGWWQGSLPTGEQGFFPSNFVQQL.

This sequence belongs to the ABP1 family.

The protein resides in the cytoplasm. Its subcellular location is the cytoskeleton. It is found in the cell projection. The protein localises to the pseudopodium. Its function is as follows. Actin-binding adapter protein. Binds to F-actin but is not involved in actin polymerization, capping or bundling. Does not bind G-actin. Controls pseudopodium number and motility in early stages of chemotactic aggregation. The polypeptide is Drebrin-like protein (abpE-1) (Dictyostelium discoideum (Social amoeba)).